A 373-amino-acid chain; its full sequence is 3 beta-hydroxysteroid dehydrogenase/Delta 5--&gt;4-isomerase type 2 (373 aa).

Tyrosine 155 serves as the catalytic Proton acceptor. Lysine 159 lines the NAD(+) pocket. The chain crosses the membrane as a helical span at residues 288–308 (LPLLYWLAFLLETVSFLLRPF).

This sequence belongs to the 3-beta-HSD family. As to expression, adrenal glands, testes and ovaries.

The protein resides in the endoplasmic reticulum membrane. It is found in the mitochondrion membrane. The enzyme catalyses a 3beta-hydroxy-Delta(5)-steroid + NAD(+) = a 3-oxo-Delta(5)-steroid + NADH + H(+). It catalyses the reaction a 3-oxo-Delta(5)-steroid = a 3-oxo-Delta(4)-steroid. It functions in the pathway lipid metabolism; steroid biosynthesis. Its function is as follows. 3-beta-HSD is a bifunctional enzyme, that catalyzes the oxidative conversion of Delta(5)-ene-3-beta-hydroxy steroid, and the oxidative conversion of ketosteroids. The 3-beta-HSD enzymatic system plays a crucial role in the biosynthesis of all classes of hormonal steroids. In Rattus norvegicus (Rat), this protein is 3 beta-hydroxysteroid dehydrogenase/Delta 5--&gt;4-isomerase type 2 (Hsd3b).